Reading from the N-terminus, the 105-residue chain is Large ribosomal subunit protein bL21 (105 aa).

This sequence belongs to the bacterial ribosomal protein bL21 family. In terms of assembly, part of the 50S ribosomal subunit. Contacts protein L20.

In terms of biological role, this protein binds to 23S rRNA in the presence of protein L20. This Rickettsia typhi (strain ATCC VR-144 / Wilmington) protein is Large ribosomal subunit protein bL21.